A 148-amino-acid chain; its full sequence is 3-dehydroquinate dehydratase (148 aa).

Y23 serves as the catalytic Proton acceptor. Substrate-binding residues include N74, H80, and D87. The active-site Proton donor is the H100. Residues 101–102 (IS) and R111 each bind substrate.

Belongs to the type-II 3-dehydroquinase family. As to quaternary structure, homododecamer.

It catalyses the reaction 3-dehydroquinate = 3-dehydroshikimate + H2O. The protein operates within metabolic intermediate biosynthesis; chorismate biosynthesis; chorismate from D-erythrose 4-phosphate and phosphoenolpyruvate: step 3/7. Functionally, catalyzes a trans-dehydration via an enolate intermediate. In Halothermothrix orenii (strain H 168 / OCM 544 / DSM 9562), this protein is 3-dehydroquinate dehydratase.